The following is a 231-amino-acid chain: Quercetin 2,3-dioxygenase (231 aa).

Histidine 57, histidine 59, histidine 101, and glutamate 103 together coordinate a divalent metal cation.

It belongs to the pirin family. Requires Zn(2+) as cofactor. The cofactor is Co(2+). Fe(2+) is required as a cofactor.

It carries out the reaction quercetin + O2 = 2-(3,4-dihydroxybenzoyloxy)-4,6-dihydroxybenzoate + CO. Its pathway is flavonoid metabolism; quercetin degradation. Its activity is regulated as follows. Inhibited by kojic acid, sodium diethyldithiocarbamate and 1,10-phenanthroline monohydrochloride. Its function is as follows. Has quercetin 2,3-dioxygenase activity in vitro. Its physiological role is unknown; however, may provide a mechanism that would avoid inhibition of key cellular proteins, such as DNA gyrase, by quercetin. The sequence is that of Quercetin 2,3-dioxygenase (yhhW) from Escherichia coli (strain K12).